Consider the following 729-residue polypeptide: Catalase-peroxidase (729 aa).

The tract at residues 1 to 20 (MHNGSNGSVEQRDSMPETSR) is disordered. A compositionally biased stretch (basic and acidic residues) spans 10-20 (EQRDSMPETSR). The tryptophyl-tyrosyl-methioninium (Trp-Tyr) (with M-240) cross-link spans 91-214 (WHAAGTYRTT…LGATVMGLIY (124 aa)). The Proton acceptor role is filled by H92. Positions 214 to 240 (YVNPEGPESTPDPEWSAQRIRKSFGRM) form a cross-link, tryptophyl-tyrosyl-methioninium (Tyr-Met) (with W-91). H255 is a binding site for heme b.

The protein belongs to the peroxidase family. Peroxidase/catalase subfamily. As to quaternary structure, homodimer or homotetramer. The cofactor is heme b. Post-translationally, formation of the three residue Trp-Tyr-Met cross-link is important for the catalase, but not the peroxidase activity of the enzyme.

It catalyses the reaction H2O2 + AH2 = A + 2 H2O. The enzyme catalyses 2 H2O2 = O2 + 2 H2O. Functionally, bifunctional enzyme with both catalase and broad-spectrum peroxidase activity. The sequence is that of Catalase-peroxidase from Salinibacter ruber (strain DSM 13855 / M31).